We begin with the raw amino-acid sequence, 88 residues long: Small ribosomal subunit protein uS15 (88 aa).

The protein belongs to the universal ribosomal protein uS15 family. In terms of assembly, part of the 30S ribosomal subunit. Forms a bridge to the 50S subunit in the 70S ribosome, contacting the 23S rRNA.

One of the primary rRNA binding proteins, it binds directly to 16S rRNA where it helps nucleate assembly of the platform of the 30S subunit by binding and bridging several RNA helices of the 16S rRNA. Its function is as follows. Forms an intersubunit bridge (bridge B4) with the 23S rRNA of the 50S subunit in the ribosome. In Francisella tularensis subsp. novicida (strain U112), this protein is Small ribosomal subunit protein uS15.